The sequence spans 434 residues: Epimerase FSL3 (434 aa).

125–126 contacts substrate; that stretch reads GF. The active-site Proton acceptor is E392.

Belongs to the aldose epimerase family. Monomer.

Its pathway is secondary metabolite biosynthesis. Epimerase; part of the gene cluster that mediates the biosynthesis of fusarielins F, G and H, decaketide compounds with 5 methylations and a decaline core that act as mycoestrogens as they stimulate growth of MCF-7 breast cancer cells. The initial compound in the pathway is produced by the reducing polyketide synthase FSL1. FSL1 lacks an active enoyl reductase (ER) domain and biosynthesis of fusarielins relies on the trans-acting enoyl reductase FSL5, before it is released through hydrolysis catalyzed by the thioesterase FSL2. Fusarielins F, G, and H have a C11=C12 cis double bond and is fully reduced between C10 and C11 and between C12 and C13. FSL3 can be involved in the formation of the C11=C12 cis double bond by moving a hypothetical C10=C11 or C12=C13 trans double bond to form prefusarielin. Prefusarielin is oxygenated at C15 and C16 by the cytochrome P450 monooxygenase FSL4, resulting in fusarielin F, which subsequently is epoxidized into fusarielin G by the same enzyme. The final step in the pathway is a reduction of the carboxylic acid moiety to yield fusarielin H via a still undetermined mechanism. This is Epimerase FSL3 from Gibberella zeae (strain ATCC MYA-4620 / CBS 123657 / FGSC 9075 / NRRL 31084 / PH-1) (Wheat head blight fungus).